The sequence spans 388 residues: Flavin-dependent monooxygenase (388 aa).

R54 is a binding site for NADPH. 3 residues coordinate FAD: D61, R117, and D311.

Belongs to the aromatic-ring hydroxylase family. TetX subfamily. Monomer. FAD is required as a cofactor.

It is found in the cytoplasm. The catalysed reaction is a tetracycline + NADPH + O2 + H(+) = an 11a-hydroxytetracycline + NADP(+) + H2O. It carries out the reaction tetracycline + NADPH + O2 + H(+) = 11a-hydroxytetracycline + NADP(+) + H2O. The enzyme catalyses oxytetracycline + NADPH + O2 + H(+) = 11a-hydroxy-oxytetracycline + NADP(+) + H2O. Functionally, an FAD-requiring monooxygenase active on some tetracycline antibiotic derivatives, which leads to their inactivation. Hydroxylates carbon 11a of tetracycline and some analogs. In terms of biological role, confers resistance to tetracycline via an oxidoreductase activity; NADPH is more active than NAD. Expression in E.coli leads to breakdown of tetracycline. Confers resistance to doxycycline, chlortetracycline, oxytetracycline and minocycline. This chain is Flavin-dependent monooxygenase, found in Bacteroides fragilis.